A 404-amino-acid polypeptide reads, in one-letter code: Putative nitronate monooxygenase (404 aa).

41 to 43 (PMA) provides a ligand contact to FMN. His224 acts as the Proton acceptor in catalysis. His224 provides a ligand contact to substrate. FMN-binding positions include 270 to 272 (AGG) and 293 to 294 (GT).

Belongs to the nitronate monooxygenase family. NMO class I subfamily. It depends on FMN as a cofactor.

The protein resides in the cytoplasm. The catalysed reaction is ethylnitronate + O2 = chemical entity + acetaldehyde + nitrite + H(+). Catalyzes the oxidation of alkyl nitronates to produce the corresponding carbonyl compounds and nitrites. This is Putative nitronate monooxygenase from Saccharomyces cerevisiae (strain ATCC 204508 / S288c) (Baker's yeast).